The sequence spans 233 residues: Glucosamine-6-phosphate deaminase (233 aa).

D62 acts as the Proton acceptor; for enolization step in catalysis. The For ring-opening step role is filled by N128. H130 (proton acceptor; for ring-opening step) is an active-site residue. E135 serves as the catalytic For ring-opening step.

It belongs to the glucosamine/galactosamine-6-phosphate isomerase family. NagB subfamily.

It carries out the reaction alpha-D-glucosamine 6-phosphate + H2O = beta-D-fructose 6-phosphate + NH4(+). It functions in the pathway amino-sugar metabolism; N-acetylneuraminate degradation; D-fructose 6-phosphate from N-acetylneuraminate: step 5/5. Catalyzes the reversible isomerization-deamination of glucosamine 6-phosphate (GlcN6P) to form fructose 6-phosphate (Fru6P) and ammonium ion. This chain is Glucosamine-6-phosphate deaminase, found in Streptococcus thermophilus (strain ATCC BAA-491 / LMD-9).